The sequence spans 213 residues: Large ribosomal subunit protein uL3 (213 aa).

The protein belongs to the universal ribosomal protein uL3 family. Part of the 50S ribosomal subunit. Forms a cluster with proteins L14 and L19.

In terms of biological role, one of the primary rRNA binding proteins, it binds directly near the 3'-end of the 23S rRNA, where it nucleates assembly of the 50S subunit. The chain is Large ribosomal subunit protein uL3 from Bifidobacterium adolescentis (strain ATCC 15703 / DSM 20083 / NCTC 11814 / E194a).